The chain runs to 313 residues: Porphobilinogen deaminase (313 aa).

At cysteine 242 the chain carries S-(dipyrrolylmethanemethyl)cysteine.

It belongs to the HMBS family. In terms of assembly, monomer. It depends on dipyrromethane as a cofactor.

The catalysed reaction is 4 porphobilinogen + H2O = hydroxymethylbilane + 4 NH4(+). The protein operates within porphyrin-containing compound metabolism; protoporphyrin-IX biosynthesis; coproporphyrinogen-III from 5-aminolevulinate: step 2/4. Tetrapolymerization of the monopyrrole PBG into the hydroxymethylbilane pre-uroporphyrinogen in several discrete steps. This is Porphobilinogen deaminase from Pseudomonas putida (strain ATCC 700007 / DSM 6899 / JCM 31910 / BCRC 17059 / LMG 24140 / F1).